The sequence spans 426 residues: Glutamate-1-semialdehyde 2,1-aminomutase (426 aa).

At lysine 267 the chain carries N6-(pyridoxal phosphate)lysine.

The protein belongs to the class-III pyridoxal-phosphate-dependent aminotransferase family. HemL subfamily. As to quaternary structure, homodimer. The cofactor is pyridoxal 5'-phosphate.

The protein localises to the cytoplasm. The enzyme catalyses (S)-4-amino-5-oxopentanoate = 5-aminolevulinate. Its pathway is porphyrin-containing compound metabolism; protoporphyrin-IX biosynthesis; 5-aminolevulinate from L-glutamyl-tRNA(Glu): step 2/2. The sequence is that of Glutamate-1-semialdehyde 2,1-aminomutase from Bdellovibrio bacteriovorus (strain ATCC 15356 / DSM 50701 / NCIMB 9529 / HD100).